Here is a 142-residue protein sequence, read N- to C-terminus: Hemoglobin subunit alpha (142 aa).

A Globin domain is found at 2 to 142; sequence VLSPADKTNV…VSTVLTSKYR (141 aa). The residue at position 4 (serine 4) is a Phosphoserine. Residue lysine 8 is modified to N6-succinyllysine. Threonine 9 is subject to Phosphothreonine. Lysine 12 is modified (N6-succinyllysine). At lysine 17 the chain carries N6-acetyllysine; alternate. Lysine 17 is modified (N6-succinyllysine; alternate). Residue tyrosine 25 is modified to Phosphotyrosine. Serine 36 carries the phosphoserine modification. Lysine 41 is subject to N6-succinyllysine. Serine 50 carries the phosphoserine modification. Residue histidine 59 coordinates O2. Histidine 88 is a binding site for heme b. Serine 103 bears the Phosphoserine mark. The residue at position 109 (threonine 109) is a Phosphothreonine. Phosphoserine is present on residues serine 125 and serine 132. Threonine 135 and threonine 138 each carry phosphothreonine. Serine 139 is subject to Phosphoserine.

It belongs to the globin family. In terms of assembly, heterotetramer of two alpha chains and two beta chains. As to expression, red blood cells.

Functionally, involved in oxygen transport from the lung to the various peripheral tissues. In terms of biological role, hemopressin acts as an antagonist peptide of the cannabinoid receptor CNR1. Hemopressin-binding efficiently blocks cannabinoid receptor CNR1 and subsequent signaling. This Sapajus apella (Brown-capped capuchin) protein is Hemoglobin subunit alpha (HBA).